The following is a 206-amino-acid chain: Methyl-coenzyme M reductase operon protein C (206 aa).

MCR is composed of three subunits: alpha, beta, and gamma. The function of proteins C and D is not known.

The polypeptide is Methyl-coenzyme M reductase operon protein C (mcrC) (Methanosarcina barkeri (strain Fusaro / DSM 804)).